We begin with the raw amino-acid sequence, 222 residues long: Thymidylate kinase (222 aa).

ATP is bound by residues 29-34 (RVGKST) and Arg111. The interval 146 to 170 (LSMSSEDATKRGEYGGERYEKLEFQ) is LID.

It belongs to the thymidylate kinase family. As to quaternary structure, homodimer. The cofactor is Mg(2+).

The catalysed reaction is dTMP + ATP = dTDP + ADP. Its pathway is pyrimidine metabolism; dTTP biosynthesis. Catalyzes the phosphorylation of thymidine monophosphate (dTMP) to thymidine diphosphate (dTDP), the immediate precursor for the DNA building block dTTP, with ATP as the preferred phosphoryl donor in the presence of Mg(2+). In Dictyostelium discoideum (Social amoeba), this protein is Thymidylate kinase (dtymk).